The chain runs to 683 residues: Solute carrier family 28 member 3 (683 aa).

The segment at 1-71 is disordered; sequence MSAFKARGVE…EEEEEGEEDQ (71 aa). Topologically, residues 1 to 97 are cytoplasmic; that stretch reads MSAFKARGVE…FYKRNKKIIH (97 aa). The span at 60–71 shows a compositional bias: acidic residues; sequence DNEEEEEGEEDQ. Residues 98 to 118 traverse the membrane as a helical segment; it reads YTFLGLLLVGYFALVIAACIV. At 119–123 the chain is on the extracellular side; it reads NFKQS. Residues 124–144 traverse the membrane as a helical segment; the sequence is LALLVLTLIAIFFFFWDLFIA. The Cytoplasmic segment spans residues 145-168; that stretch reads KYGDKIAEALKPCQKFLDNHWSII. A helical membrane pass occupies residues 169 to 189; it reads RWFVYGALLLAVILWLTLDTA. At 190-192 the chain is on the extracellular side; sequence KRG. A helical transmembrane segment spans residues 193-214; sequence ANQVIPFFGLILYILLVFIFSK. At 215–222 the chain is on the cytoplasmic side; it reads HPTKVRWR. Residues 223–242 form a helical membrane-spanning segment; sequence IVIWGLLLQFIFGLIILRTK. Residues 243–279 are Extracellular-facing; the sequence is PGLDAFNWLGIQVQTFLKYTDAGSRFLFGDDFQDHFF. Residues 280–300 form a helical membrane-spanning segment; that stretch reads AFAVLPIVIFFSTVMSMMYYL. Residues 301 to 324 lie on the Cytoplasmic side of the membrane; the sequence is GLMQWLILKVGWLMQITMGTSPME. Residues 325–343 constitute an intramembrane region (helical); it reads SMVSAGNIFVGQTESPLLI. Residues 344–356 are Cytoplasmic-facing; sequence RPYLADLTISEMH. The helical transmembrane segment at 357–379 threads the bilayer; it reads SVMSSGFATIAGSVLGAYISLGI. Over 380–381 the chain is Extracellular; it reads PA. A helical membrane pass occupies residues 382–403; the sequence is AHLLTASVMSAPAALAISKTFW. The Cytoplasmic segment spans residues 404-438; it reads PETKKSKNSTQTSIKLEKGQENNLVEAASQGASAA. A helical membrane pass occupies residues 439–464; it reads VPLVANIAANLIAFLAVLAFINATLS. At 465 to 502 the chain is on the extracellular side; it reads WLGSMFNYPQFSFEIICSYVLMPFAFMMGVNYDDSFLV. The helical intramembrane region spans 503 to 522; that stretch reads AELLGMKTFFNEFVAYQRLS. Topologically, residues 523-561 are extracellular; it reads EYIHNRESGGPLFVDGVRQYMSVRSEAIATYALCGFANF. Residues 562–572 form a helical membrane-spanning segment; that stretch reads GSLGIMIGGLS. Residues 573–585 lie on the Cytoplasmic side of the membrane; the sequence is SLAPHRKSDIASC. A helical transmembrane segment spans residues 586-608; sequence GIRALIAGTIACFSTACIAGVLY. Topologically, residues 609-683 are extracellular; sequence IPELYCPNLL…GFNCSEVRPE (75 aa).

This sequence belongs to the concentrative nucleoside transporter (CNT) (TC 2.A.41) family. In terms of assembly, homotrimer.

It is found in the cell membrane. It catalyses the reaction thymidine(out) + 2 Na(+)(out) = thymidine(in) + 2 Na(+)(in). The enzyme catalyses cytidine(out) + 2 Na(+)(out) = cytidine(in) + 2 Na(+)(in). It carries out the reaction uridine(out) + 2 Na(+)(out) = uridine(in) + 2 Na(+)(in). The catalysed reaction is adenosine(out) + 2 Na(+)(out) = adenosine(in) + 2 Na(+)(in). It catalyses the reaction guanosine(out) + 2 Na(+)(out) = guanosine(in) + 2 Na(+)(in). The enzyme catalyses inosine(out) + 2 Na(+)(out) = inosine(in) + 2 Na(+)(in). In terms of biological role, sodium-dependent, pyrimidine- and purine-selective. Involved in the homeostasis of endogenous nucleosides. Exhibits the transport characteristics of the nucleoside transport system cib or N3 subtype (N3/cib) (with marked transport of both thymidine and inosine). Employs a 2:1 sodium/nucleoside ratio. Also able to transport gemcitabine, 3'-azido-3'-deoxythymidine (AZT), ribavirin and 3-deazauridine. In Eptatretus stoutii (Pacific hagfish), this protein is Solute carrier family 28 member 3 (SLC28A3).